A 456-amino-acid polypeptide reads, in one-letter code: tRNA(Ile)-lysidine synthase (456 aa).

Residue serine 27–serine 32 coordinates ATP.

The protein belongs to the tRNA(Ile)-lysidine synthase family.

It localises to the cytoplasm. The enzyme catalyses cytidine(34) in tRNA(Ile2) + L-lysine + ATP = lysidine(34) in tRNA(Ile2) + AMP + diphosphate + H(+). Ligates lysine onto the cytidine present at position 34 of the AUA codon-specific tRNA(Ile) that contains the anticodon CAU, in an ATP-dependent manner. Cytidine is converted to lysidine, thus changing the amino acid specificity of the tRNA from methionine to isoleucine. The polypeptide is tRNA(Ile)-lysidine synthase (Vibrio atlanticus (strain LGP32) (Vibrio splendidus (strain Mel32))).